The primary structure comprises 162 residues: Flagellar assembly factor FliW (162 aa).

The protein belongs to the FliW family. Interacts with translational regulator CsrA and flagellin(s).

It is found in the cytoplasm. Its function is as follows. Acts as an anti-CsrA protein, binds CsrA and prevents it from repressing translation of its target genes, one of which is flagellin. Binds to flagellin and participates in the assembly of the flagellum. This is Flagellar assembly factor FliW from Magnetococcus marinus (strain ATCC BAA-1437 / JCM 17883 / MC-1).